Reading from the N-terminus, the 316-residue chain is Transcription termination/antitermination protein NusG (316 aa).

Belongs to the NusG family.

Participates in transcription elongation, termination and antitermination. The polypeptide is Transcription termination/antitermination protein NusG (Mycoplasma genitalium (strain ATCC 33530 / DSM 19775 / NCTC 10195 / G37) (Mycoplasmoides genitalium)).